Consider the following 550-residue polypeptide: Amino acid transporter AVT1D (550 aa).

The segment covering 1-16 has biased composition (basic and acidic residues); it reads MKLDEEFLHDRDHSFL. Residues 1–99 are disordered; sequence MKLDEEFLHD…FMPQSSSRRL (99 aa). Positions 84–99 are enriched in polar residues; it reads TPPSVSFMPQSSSRRL. 11 helical membrane-spanning segments follow: residues 164–184, 189–209, 236–256, 264–286, 308–328, 345–365, 375–395, 424–444, 459–479, 481–501, and 521–541; these read SVLN…PYAI, WLGL…GVLM, FIIS…YIIM, LFPN…IFAI, SVGG…VGAV, LPVT…FPNI, FPLV…AVAV, VWTA…PIVM, GVSI…ALSV, FFAI…ALIF, and LCIF…YSAI.

This sequence belongs to the amino acid/polyamine transporter 2 family. Amino acid/auxin permease (AAAP) (TC 2.A.18.5) subfamily.

It localises to the membrane. This Arabidopsis thaliana (Mouse-ear cress) protein is Amino acid transporter AVT1D.